Consider the following 251-residue polypeptide: Prolactin-7C1 (251 aa).

A signal peptide spans 1-30 (MLLSLTHPSFLAMLPMLLMSNLLQWEGVTS). Residue Asn-57 is glycosylated (N-linked (GlcNAc...) asparagine). 2 cysteine pairs are disulfide-bonded: Cys-101/Cys-217 and Cys-234/Cys-242.

The protein belongs to the somatotropin/prolactin family. As to expression, expressed exclusively in the placenta. Expressed in spongiotrophoblast cells and trophoblast giant cells of the junctional zone and in labyrinthine trophoblast.

The protein localises to the secreted. This chain is Prolactin-7C1 (Prl7c1), found in Mus musculus (Mouse).